A 38-amino-acid polypeptide reads, in one-letter code: Toxin Lqh 8/6 (38 aa).

Disulfide bonds link C2–C19, C5–C28, C16–C33, and C20–C35.

In terms of tissue distribution, expressed by the venom gland.

The protein localises to the secreted. Toxin with unknown function in healthy organisms. On glioma cells, interacts with chloride channels (probably ClC-3/CLCN3) and MMP2 at the surface of glioma cells. This complex is then internalized via caveolae, thus inhibiting the chloride channels necessary for cell shrinkage and tumor propagation. The protein is Toxin Lqh 8/6 of Leiurus hebraeus (Hebrew deathstalker scorpion).